The sequence spans 261 residues: Triosephosphate isomerase (261 aa).

10-12 (NWK) is a binding site for substrate. Histidine 100 functions as the Electrophile in the catalytic mechanism. The active-site Proton acceptor is the glutamate 172. Substrate is bound by residues glycine 178, serine 218, and 239 to 240 (GG).

Belongs to the triosephosphate isomerase family. As to quaternary structure, homodimer.

It is found in the cytoplasm. It catalyses the reaction D-glyceraldehyde 3-phosphate = dihydroxyacetone phosphate. It functions in the pathway carbohydrate biosynthesis; gluconeogenesis. Its pathway is carbohydrate degradation; glycolysis; D-glyceraldehyde 3-phosphate from glycerone phosphate: step 1/1. In terms of biological role, involved in the gluconeogenesis. Catalyzes stereospecifically the conversion of dihydroxyacetone phosphate (DHAP) to D-glyceraldehyde-3-phosphate (G3P). In Saccharopolyspora erythraea (strain ATCC 11635 / DSM 40517 / JCM 4748 / NBRC 13426 / NCIMB 8594 / NRRL 2338), this protein is Triosephosphate isomerase.